The sequence spans 128 residues: UPF0325 protein KPN78578_01770 (128 aa).

Belongs to the UPF0325 family.

In Klebsiella pneumoniae subsp. pneumoniae (strain ATCC 700721 / MGH 78578), this protein is UPF0325 protein KPN78578_01770.